The sequence spans 275 residues: MAAYTAADVKALREKTGAGMLDCKNALVESEGDVEKAIELLRIKGQKGVAKREDRDASNGLVAVHTDGGLGVMVQLNCETDFVAKSEGFIALSQQVLDQAVAVAATDAESLLASDLGGRTVQELLDEANATMGEKILVPRVARIEGTHVSAYLHRTATDLPPTIGVLVALDAVNDEIGKDVAMHTAAMSPTYLTREDVPAEKVESERRIAEETAREENKPEAAMAKIVEGRVNSYFKDNVLLEQPFAKDPKTTITKLLAGAGVHVTSFARFRAGA.

The interval 80–83 (TDFV) is involved in Mg(2+) ion dislocation from EF-Tu.

This sequence belongs to the EF-Ts family.

The protein resides in the cytoplasm. In terms of biological role, associates with the EF-Tu.GDP complex and induces the exchange of GDP to GTP. It remains bound to the aminoacyl-tRNA.EF-Tu.GTP complex up to the GTP hydrolysis stage on the ribosome. This is Elongation factor Ts from Kineococcus radiotolerans (strain ATCC BAA-149 / DSM 14245 / SRS30216).